Here is an 805-residue protein sequence, read N- to C-terminus: G-type lectin S-receptor-like serine/threonine-protein kinase SD1-29 (805 aa).

Positions 1-21 (MGMVLFACLLLLIIFPTCGYA) are cleaved as a signal peptide. Residues 22–141 (AINTSSPLSI…VSGNKLWQSF (120 aa)) form the Bulb-type lectin domain. Topologically, residues 22–428 (AINTSSPLSI…SELAGSSRRK (407 aa)) are extracellular. N-linked (GlcNAc...) asparagine glycosylation is found at asparagine 24, asparagine 50, asparagine 85, asparagine 91, and asparagine 248. The EGF-like domain occupies 277–313 (PENPCDLYGRCGPYGLCVRSDPPKCECLKGFVPKSDE). 2 disulfide bridges follow: cysteine 281–cysteine 293 and cysteine 287–cysteine 301. N-linked (GlcNAc...) asparagine glycans are attached at residues asparagine 319 and asparagine 378. The PAN domain occupies 332–418 (CQAKSSMKTQ…GEFLFIRLAS (87 aa)). Cystine bridges form between cysteine 371–cysteine 392 and cysteine 375–cysteine 381. The helical transmembrane segment at 429–449 (IIVGTTVSLSIFLILVFAAIM) threads the bilayer. Residues 450–805 (LWRYRAKQND…EMTESMIQGR (356 aa)) lie on the Cytoplasmic side of the membrane. In terms of domain architecture, Protein kinase spans 488 to 773 (FSPSNKLGQG…DLPVPKQPIF (286 aa)). ATP contacts are provided by residues 494-502 (LGQGGFGPV) and lysine 516. A phosphoserine mark is found at serine 522 and serine 537. Positions 577 to 594 (CLKFELDWPKRFNIIQGI) are caM-binding. Tyrosine 600 bears the Phosphotyrosine mark. Aspartate 613 acts as the Proton acceptor in catalysis. Phosphoserine is present on residues serine 617 and serine 630. Threonine 647 is subject to Phosphothreonine. Serine 690 and serine 793 each carry phosphoserine.

Belongs to the protein kinase superfamily. Ser/Thr protein kinase family. Interacts with PUB9, PUB13, PUB14, PUB29, PUB38, PUB44 and PUB45. Interacts with PBL34, PBL35 and PBL36. Post-translationally, autophosphorylated at Tyr-600. Autophosphorylation at Tyr-600 is required for downstream phosphorylation of the receptor-like cytoplasmic kinase PBL34, PBL35 and PBL36, and activation of plant immunity.

The protein resides in the cell membrane. It carries out the reaction L-seryl-[protein] + ATP = O-phospho-L-seryl-[protein] + ADP + H(+). It catalyses the reaction L-threonyl-[protein] + ATP = O-phospho-L-threonyl-[protein] + ADP + H(+). The catalysed reaction is L-tyrosyl-[protein] + ATP = O-phospho-L-tyrosyl-[protein] + ADP + H(+). Functionally, S-domain receptor protein kinase involved in lipopolysaccharide (LPS) sensing. Specifically detects LPS of Pseudomonas and Xanthomonas species. LPS are major components of the outer membrane of Gram-negative bacteria and are important microbe-associated molecular patterns (MAMPs) that trigger biphasic production of reactive oxygen species (ROS) and immune responses in plants. Seems to be only partially associated with the second LPS-triggered ROS burst. Mediates defense signaling in response to the medium-chain 3-hydroxy fatty acid 3-OH-C10:0, a pathogen-associated molecular pattern (PAMP) which induces autophosphorylation at Tyr-600. Autophosphorylation at Tyr-600 is required for downstream phosphorylation of the receptor-like cytoplasmic kinase PBL34, PBL35 and PBL36, and activation of plant immunity. In terms of biological role, (Microbial infection) Targeted by the bacterial type III effector protein tyrosine phosphatase HopAO1 from Pseudomonas syringae. HopAO1 dephosphorylates Tyr-600, which suppresses the immune response. The sequence is that of G-type lectin S-receptor-like serine/threonine-protein kinase SD1-29 from Arabidopsis thaliana (Mouse-ear cress).